Here is a 908-residue protein sequence, read N- to C-terminus: Protein translocase subunit SecA (908 aa).

Residues Gln-87, 105-109, and Asp-507 each bind ATP; that span reads GEGKT. A disordered region spans residues 860–898; it reads EALGNAEESDEASDQSVKTFERAGAKVGRNDPCPCGSGK. Residues Cys-892, Cys-894, Cys-903, and His-904 each contribute to the Zn(2+) site.

Belongs to the SecA family. As to quaternary structure, monomer and homodimer. Part of the essential Sec protein translocation apparatus which comprises SecA, SecYEG and auxiliary proteins SecDF-YajC and YidC. Zn(2+) is required as a cofactor.

Its subcellular location is the cell inner membrane. It is found in the cytoplasm. The catalysed reaction is ATP + H2O + cellular proteinSide 1 = ADP + phosphate + cellular proteinSide 2.. In terms of biological role, part of the Sec protein translocase complex. Interacts with the SecYEG preprotein conducting channel. Has a central role in coupling the hydrolysis of ATP to the transfer of proteins into and across the cell membrane, serving both as a receptor for the preprotein-SecB complex and as an ATP-driven molecular motor driving the stepwise translocation of polypeptide chains across the membrane. This is Protein translocase subunit SecA from Methylobacillus flagellatus (strain ATCC 51484 / DSM 6875 / VKM B-1610 / KT).